We begin with the raw amino-acid sequence, 396 residues long: Deoxyuridine 5'-triphosphate nucleotidohydrolase (396 aa).

Substrate contacts are provided by residues Arg280–Ser282 and Phe380–Gly381.

The protein belongs to the dUTPase family. Mg(2+) is required as a cofactor.

It catalyses the reaction dUTP + H2O = dUMP + diphosphate + H(+). Functionally, involved in nucleotide metabolism: produces dUMP, the immediate precursor of thymidine nucleotides and decreases the intracellular concentration of dUTP to avoid uracil incorporation into viral DNA. In Homo sapiens (Human), this protein is Deoxyuridine 5'-triphosphate nucleotidohydrolase.